Consider the following 633-residue polypeptide: Phosphomethylpyrimidine synthase (633 aa).

A compositionally biased stretch (polar residues) spans 1-13 (MNIRSNPDTTLPA). The tract at residues 1-22 (MNIRSNPDTTLPAVTTGPLPSS) is disordered. Substrate contacts are provided by residues N221, M250, Y279, H315, 335-337 (SRG), 376-379 (DGLR), and E415. H419 contributes to the Zn(2+) binding site. Substrate is bound at residue Y442. Residue H483 participates in Zn(2+) binding. Residues C563, C566, and C571 each contribute to the [4Fe-4S] cluster site.

Belongs to the ThiC family. In terms of assembly, homodimer. [4Fe-4S] cluster serves as cofactor.

It catalyses the reaction 5-amino-1-(5-phospho-beta-D-ribosyl)imidazole + S-adenosyl-L-methionine = 4-amino-2-methyl-5-(phosphooxymethyl)pyrimidine + CO + 5'-deoxyadenosine + formate + L-methionine + 3 H(+). The protein operates within cofactor biosynthesis; thiamine diphosphate biosynthesis. Its function is as follows. Catalyzes the synthesis of the hydroxymethylpyrimidine phosphate (HMP-P) moiety of thiamine from aminoimidazole ribotide (AIR) in a radical S-adenosyl-L-methionine (SAM)-dependent reaction. In Bradyrhizobium sp. (strain BTAi1 / ATCC BAA-1182), this protein is Phosphomethylpyrimidine synthase.